A 502-amino-acid chain; its full sequence is GTPase Obg (502 aa).

Residues 2 to 159 form the Obg domain; it reads NRFIDRVVLH…HDLILELKSM (158 aa). Residues 160–341 enclose the OBG-type G domain; sequence ADVGLVGFPS…LKYKLLEIVQ (182 aa). GTP is bound by residues 166 to 173, 191 to 195, 212 to 215, 292 to 295, and 322 to 324; these read GFPSAGKS, FTTLQ, DVPG, NKAD, and SAV. Ser-173 and Thr-193 together coordinate Mg(2+). The OCT domain occupies 364-444; that stretch reads DGRRRREEFE…IGGVTFEWEP (81 aa).

The protein belongs to the TRAFAC class OBG-HflX-like GTPase superfamily. OBG GTPase family. Monomer. Requires Mg(2+) as cofactor.

It localises to the cytoplasm. Its function is as follows. An essential GTPase which binds GTP, GDP and possibly (p)ppGpp with moderate affinity, with high nucleotide exchange rates and a fairly low GTP hydrolysis rate. Plays a role in control of the cell cycle, stress response, ribosome biogenesis and in those bacteria that undergo differentiation, in morphogenesis control. The protein is GTPase Obg of Corynebacterium efficiens (strain DSM 44549 / YS-314 / AJ 12310 / JCM 11189 / NBRC 100395).